Here is a 297-residue protein sequence, read N- to C-terminus: Ribosomal RNA small subunit methyltransferase A (297 aa).

6 residues coordinate S-adenosyl-L-methionine: Asn-28, Leu-30, Gly-55, Glu-76, Asp-101, and Asn-126.

It belongs to the class I-like SAM-binding methyltransferase superfamily. rRNA adenine N(6)-methyltransferase family. RsmA subfamily.

Its subcellular location is the cytoplasm. It carries out the reaction adenosine(1518)/adenosine(1519) in 16S rRNA + 4 S-adenosyl-L-methionine = N(6)-dimethyladenosine(1518)/N(6)-dimethyladenosine(1519) in 16S rRNA + 4 S-adenosyl-L-homocysteine + 4 H(+). In terms of biological role, specifically dimethylates two adjacent adenosines (A1518 and A1519) in the loop of a conserved hairpin near the 3'-end of 16S rRNA in the 30S particle. May play a critical role in biogenesis of 30S subunits. This is Ribosomal RNA small subunit methyltransferase A from Latilactobacillus sakei subsp. sakei (strain 23K) (Lactobacillus sakei subsp. sakei).